Here is a 413-residue protein sequence, read N- to C-terminus: Eukaryotic initiation factor 4A-7 (413 aa).

The short motif at 40 to 68 is the Q motif element; it reads DSFDAMGLQENLLRGIYAYGFEKPSAIQQ. The Helicase ATP-binding domain maps to 71–241; sequence IVPFCKGLDV…RKFMNKPVRI (171 aa). 84-91 is a binding site for ATP; it reads AQSGTGKT. The DEAD box signature appears at 189–192; sequence DEAD. In terms of domain architecture, Helicase C-terminal spans 252-413; sequence GIKQFYVNVD…ELPANVADLL (162 aa).

The protein belongs to the DEAD box helicase family. eIF4A subfamily. As to quaternary structure, eIF4F is a multi-subunit complex, the composition of which varies with external and internal environmental conditions. It is composed of at least EIF4A, EIF4E and EIF4G.

It carries out the reaction ATP + H2O = ADP + phosphate + H(+). Its function is as follows. ATP-dependent RNA helicase which is a subunit of the eIF4F complex involved in cap recognition and is required for mRNA binding to ribosome. In the current model of translation initiation, eIF4A unwinds RNA secondary structures in the 5'-UTR of mRNAs which is necessary to allow efficient binding of the small ribosomal subunit, and subsequent scanning for the initiator codon. In Nicotiana tabacum (Common tobacco), this protein is Eukaryotic initiation factor 4A-7.